Reading from the N-terminus, the 527-residue chain is Putative adhesin P1-like protein MPN_500 (527 aa).

4 disordered regions span residues 1-26 (MDDITAPQTSAGSSSGTSTNTSGSRS), 76-148 (GWRN…LTNY), 248-269 (ASGSGSNTTSSPGIGFKIPEQS), and 468-527 (FGTD…VSGH). Positions 9-26 (TSAGSSSGTSTNTSGSRS) are enriched in low complexity. Polar residues predominate over residues 82-95 (TTSGSTGNANDTKF). The span at 108–117 (SSGTNTSAGN) shows a compositional bias: low complexity. Polar residues predominate over residues 128–148 (QNGQVKTSVQEATSGDNLTNY). Low complexity predominate over residues 248-262 (ASGSGSNTTSSPGIG). Polar residues predominate over residues 468–495 (FGTDHSTQPQPQSLKTTTPVFGRSSGNL). A compositionally biased stretch (gly residues) spans 500 to 513 (SGGGAGGGSSGSGQ).

This sequence belongs to the adhesin P1 family.

The polypeptide is Putative adhesin P1-like protein MPN_500 (Mycoplasma pneumoniae (strain ATCC 29342 / M129 / Subtype 1) (Mycoplasmoides pneumoniae)).